We begin with the raw amino-acid sequence, 329 residues long: Ribosomal RNA small subunit methyltransferase H (329 aa).

S-adenosyl-L-methionine contacts are provided by residues Gly34–Tyr36, Asp52, Phe79, Asp100, and Gln107. The tract at residues Gly285 to Gly329 is disordered.

It belongs to the methyltransferase superfamily. RsmH family.

It is found in the cytoplasm. It carries out the reaction cytidine(1402) in 16S rRNA + S-adenosyl-L-methionine = N(4)-methylcytidine(1402) in 16S rRNA + S-adenosyl-L-homocysteine + H(+). Specifically methylates the N4 position of cytidine in position 1402 (C1402) of 16S rRNA. The protein is Ribosomal RNA small subunit methyltransferase H of Bradyrhizobium diazoefficiens (strain JCM 10833 / BCRC 13528 / IAM 13628 / NBRC 14792 / USDA 110).